The chain runs to 154 residues: GTP-dependent dephospho-CoA kinase (154 aa).

Residues aspartate 34, aspartate 53, and glutamate 107 each contribute to the GTP site.

It belongs to the GTP-dependent DPCK family.

The enzyme catalyses 3'-dephospho-CoA + GTP = GDP + CoA + H(+). It participates in cofactor biosynthesis; coenzyme A biosynthesis. Functionally, catalyzes the GTP-dependent phosphorylation of the 3'-hydroxyl group of dephosphocoenzyme A to form coenzyme A (CoA). In Nitrosopumilus maritimus (strain SCM1), this protein is GTP-dependent dephospho-CoA kinase.